Consider the following 131-residue polypeptide: Calvin cycle protein CP12-2, chloroplastic (131 aa).

Residues 1 to 53 constitute a chloroplast transit peptide; the sequence is MATIATGLNIATQRVFVTSENRPVCLAGPVHLNNSWNLGSRTTNRMMKLQPIK. 2 cysteine pairs are disulfide-bonded: Cys-75–Cys-84 and Cys-117–Cys-126. The interval 97-131 is disordered; sequence AASHARDKKKADGSDPLEEYCKDNPETNECRTYDN. Residues 105–131 are compositionally biased toward basic and acidic residues; sequence KKADGSDPLEEYCKDNPETNECRTYDN.

It belongs to the CP12 family. In terms of assembly, monomer. Component of a complex that contains two dimers of PRK, two tetramers of GAPDH and CP12. CP12 associates with GAPDH, causing its conformation to change. This GAPDH/CP12 complex binds PRK to form a half-complex (one unit). This unit probably dimerizes due partially to interactions between the enzymes of each unit. Contains two disulfide bonds; only the oxidized protein, with two disulfide bonds, is active in complex formation. The C-terminal disulfide is involved in the interaction with GAPDH and the N-terminal disulfide mediates the binding of PRK with this binary complex. As to expression, mostly expressed in cotyledons, leaves and flower stalks, and, to a lower extent, in flowers and stems. Barely detectable in roots and siliques.

Its subcellular location is the plastid. The protein localises to the chloroplast. Functionally, acts as a linker essential in the assembly of a core complex of PRK/GAPDH. Coordinates the reversible inactivation of chloroplast enzymes GAPDH and PRK during darkness in photosynthetic tissues. The sequence is that of Calvin cycle protein CP12-2, chloroplastic (CP12-2) from Arabidopsis thaliana (Mouse-ear cress).